Here is a 1455-residue protein sequence, read N- to C-terminus: DNA polymerase II large subunit (1455 aa).

The interval 1409 to 1440 is disordered; sequence GLLENLSNGSKKTEKAEKAEKPRKKSDEKPKK. The segment covering 1419-1438 has biased composition (basic and acidic residues); sequence KKTEKAEKAEKPRKKSDEKP.

Belongs to the archaeal DNA polymerase II family. In terms of assembly, heterodimer of a large subunit and a small subunit. Post-translationally, this protein undergoes a protein self splicing that involves a post-translational excision of the intervening region (intein) followed by peptide ligation.

It carries out the reaction DNA(n) + a 2'-deoxyribonucleoside 5'-triphosphate = DNA(n+1) + diphosphate. The catalysed reaction is Exonucleolytic cleavage in the 3'- to 5'-direction to yield nucleoside 5'-phosphates.. Possesses two activities: a DNA synthesis (polymerase) and an exonucleolytic activity that degrades single-stranded DNA in the 3'- to 5'-direction. Has a template-primer preference which is characteristic of a replicative DNA polymerase. The protein is DNA polymerase II large subunit (polC) of Pyrococcus abyssi (strain GE5 / Orsay).